The primary structure comprises 474 residues: 3-isopropylmalate dehydratase large subunit (474 aa).

3 residues coordinate [4Fe-4S] cluster: Cys-355, Cys-415, and Cys-418.

The protein belongs to the aconitase/IPM isomerase family. LeuC type 1 subfamily. Heterodimer of LeuC and LeuD. Requires [4Fe-4S] cluster as cofactor.

The enzyme catalyses (2R,3S)-3-isopropylmalate = (2S)-2-isopropylmalate. The protein operates within amino-acid biosynthesis; L-leucine biosynthesis; L-leucine from 3-methyl-2-oxobutanoate: step 2/4. Catalyzes the isomerization between 2-isopropylmalate and 3-isopropylmalate, via the formation of 2-isopropylmaleate. The sequence is that of 3-isopropylmalate dehydratase large subunit from Shewanella sp. (strain W3-18-1).